A 196-amino-acid polypeptide reads, in one-letter code: Small ribosomal subunit protein uS4c (196 aa).

The tract at residues Leu15–Gln43 is disordered. The 62-residue stretch at Met89–Asn150 folds into the S4 RNA-binding domain.

It belongs to the universal ribosomal protein uS4 family. As to quaternary structure, part of the 30S ribosomal subunit. Contacts protein S5. The interaction surface between S4 and S5 is involved in control of translational fidelity.

The protein resides in the plastid. The protein localises to the chloroplast. One of the primary rRNA binding proteins, it binds directly to 16S rRNA where it nucleates assembly of the body of the 30S subunit. Its function is as follows. With S5 and S12 plays an important role in translational accuracy. This chain is Small ribosomal subunit protein uS4c (rps4), found in Melinis repens (Red Natal grass).